Consider the following 151-residue polypeptide: Probable cyclic pyranopterin monophosphate synthase (151 aa).

Residues 66-68 and 102-103 each bind substrate; these read MCH and ME. Aspartate 117 is a catalytic residue.

The protein belongs to the MoaC family. In terms of assembly, homohexamer; trimer of dimers.

The catalysed reaction is (8S)-3',8-cyclo-7,8-dihydroguanosine 5'-triphosphate = cyclic pyranopterin phosphate + diphosphate. It participates in cofactor biosynthesis; molybdopterin biosynthesis. Catalyzes the conversion of (8S)-3',8-cyclo-7,8-dihydroguanosine 5'-triphosphate to cyclic pyranopterin monophosphate (cPMP). The polypeptide is Probable cyclic pyranopterin monophosphate synthase (Sulfurisphaera tokodaii (strain DSM 16993 / JCM 10545 / NBRC 100140 / 7) (Sulfolobus tokodaii)).